We begin with the raw amino-acid sequence, 132 residues long: Small ribosomal subunit protein uS8 (132 aa).

This sequence belongs to the universal ribosomal protein uS8 family. As to quaternary structure, part of the 30S ribosomal subunit. Contacts proteins S5 and S12.

In terms of biological role, one of the primary rRNA binding proteins, it binds directly to 16S rRNA central domain where it helps coordinate assembly of the platform of the 30S subunit. This chain is Small ribosomal subunit protein uS8, found in Kocuria rhizophila (strain ATCC 9341 / DSM 348 / NBRC 103217 / DC2201).